Reading from the N-terminus, the 310-residue chain is MINAIRTPDQRFSNLDQYPFSPNYLDDLPGYPGLRAHYLDEGNSDAEDVFLCLHGEPTWSYLYRKMIPVFAESGARVIAPDFFGFGKSDKPVDEEDYTFEFHRNFLLALIERLDLRNITLVVQDWGGFLGLTLPMADPSRFKRLIIMNACLMTDPVTQPAFSAFVTQPADGFTAWKYDLVTPSDLRLDQFMKRWAPTLTEAEASAYAAPFPDTSYQAGVRKFPKMVAQRDQACIDISTEAISFWQNDWNGQTFMAIGMKDKLLGPDVMYPMKALINGCPEPLEIADAGHFVQEFGEQVAREALKHFAETE.

The 247-residue stretch at 49–295 (VFLCLHGEPT…DAGHFVQEFG (247 aa)) folds into the AB hydrolase-1 domain. Asp124 functions as the Nucleophile in the catalytic mechanism. Chloride is bound by residues Trp125 and Trp175. The active-site Proton donor is the Asp260. His289 (proton acceptor) is an active-site residue.

Belongs to the haloalkane dehalogenase family. Type 1 subfamily. As to quaternary structure, monomer.

The enzyme catalyses 1-haloalkane + H2O = a halide anion + a primary alcohol + H(+). It catalyses the reaction 1,2-dichloroethane + H2O = 2-chloroethanol + chloride + H(+). Its pathway is xenobiotic degradation; 1,2-dichloroethane degradation; glycolate from 1,2-dichloroethane: step 1/4. Its activity is regulated as follows. Inhibited by thiol reagents such as p-chloromercuribenzoate and iodoacetamide. In terms of biological role, catalyzes hydrolytic cleavage of carbon-halogen bonds in halogenated aliphatic compounds, leading to the formation of the corresponding primary alcohols, halide ions and protons. Has a broad substrate specificity, which includes terminally mono- and di- chlorinated and brominated alkanes (up to C4 only). The highest activity was found with 1,2-dichloroethane, 1,3-dichloropropane, and 1,2-dibromoethane. In Xanthobacter autotrophicus, this protein is Haloalkane dehalogenase (dhlA).